The following is a 136-amino-acid chain: Phospholipase A2 (136 aa).

Residues tryptophan 8, glycine 10, and glycine 12 each coordinate Ca(2+). 5 cysteine pairs are disulfide-bonded: cysteine 9–cysteine 31, cysteine 30–cysteine 70, cysteine 37–cysteine 63, cysteine 61–cysteine 95, and cysteine 105–cysteine 117. The N-linked (GlcNAc...) asparagine glycan is linked to asparagine 16. Histidine 34 is a catalytic residue. Aspartate 35 serves as a coordination point for Ca(2+). Aspartate 64 is a catalytic residue.

Belongs to the phospholipase A2 family. Ca(2+) is required as a cofactor. In terms of tissue distribution, expressed by the venom gland.

The protein localises to the secreted. It carries out the reaction a 1,2-diacyl-sn-glycero-3-phosphocholine + H2O = a 1-acyl-sn-glycero-3-phosphocholine + a fatty acid + H(+). Functionally, PLA2 catalyzes the calcium-dependent hydrolysis of the 2-acyl groups in 3-sn-phosphoglycerides. In Bombus terrestris (Buff-tailed bumblebee), this protein is Phospholipase A2.